The chain runs to 463 residues: MRVPNEVCFNILSYLEADELRCKSTVCTSWRNFIIPTLWEKVVFQNEAQLNNFFDTLQYSKDVSYYFRYLRKLNCSRVRKFLTDKHLMLMTLATGISRLNLSGCTRISEPLIGKLLYQNLNLVTINFSNIFSLPANILEYISDNCPNLKALNIGNCGLVEDTGMVQIIKRCPYLNRLIIPNCRKLTDVSLQILSEKEDLIELDISGCEGFHNADTLSRLVSRNRGLKELSMDGCTELSHFITFLNLNCELDAMRALSLNNLPDLKDSDIELITCKFSKLNSLFLSKCIGLTDSSLLSLTKLSQSLTTLHLGHCYEITDIGVQCLLKSCKNITYIDFGGCLRLSDIAVSAIAKLPYLQRVGLVKCICLTDLSVILLSGSFSRNLERVHLSYCIGLTAKSVSYLMYNCKTLKHLSVTGINSILCTELRSFSRPIPDGINPSQVPVFCAFTKVEIDLFREFIRNRI.

The region spanning 1–42 is the F-box domain; that stretch reads MRVPNEVCFNILSYLEADELRCKSTVCTSWRNFIIPTLWEKV. LRR repeat units lie at residues 145-170, 171-196, 198-220, 225-247, 249-271, 278-299, 304-326, 328-353, 354-378, and 380-405; these read CPNL…IIKR, CPYL…LSEK, DLIE…SRLV, GLKE…LNLN, ELDA…DIEL, KLNS…LSLT, SLTT…CLLK, CKNI…IAKL, PYLQ…LSGS, and SRNL…LMYN.

As to quaternary structure, part of a SCF E3 ubiquitin ligase complex. Interacts with skp1.

It is found in the mitochondrion. Functionally, involved in substrate recognition in ubiquitin-dependent degradation. The protein is SCF E3 ubiquitin ligase complex F-box protein pof2 (pof2) of Schizosaccharomyces pombe (strain 972 / ATCC 24843) (Fission yeast).